We begin with the raw amino-acid sequence, 22 residues long: Peroxidase 5 (22 aa).

Belongs to the peroxidase family. Classical plant (class III) peroxidase subfamily. The cofactor is heme b. It depends on Ca(2+) as a cofactor.

Its subcellular location is the secreted. The protein resides in the cell wall. It catalyses the reaction 2 a phenolic donor + H2O2 = 2 a phenolic radical donor + 2 H2O. Functionally, removal of H(2)O(2), oxidation of toxic reductants, biosynthesis and degradation of lignin, suberization, auxin catabolism, response to environmental stresses such as wounding, pathogen attack and oxidative stress. These functions might be dependent on each isozyme/isoform in each plant tissue. The sequence is that of Peroxidase 5 from Cycas revoluta (Sago palm).